A 930-amino-acid polypeptide reads, in one-letter code: uncharacterized protein (930 aa).

Residues 1-20 form the signal peptide; it reads MPSFVLWTFHLCSQWFQGLT. Residues Asn137, Asn146, Asn164, Asn210, Asn257, Asn628, Asn717, and Asn799 are each glycosylated (N-linked (GlcNAc...) asparagine).

The protein localises to the secreted. This is an uncharacterized protein from Arthroderma benhamiae (strain ATCC MYA-4681 / CBS 112371) (Trichophyton mentagrophytes).